A 615-amino-acid chain; its full sequence is Ras association domain-containing protein 1 homolog (615 aa).

2 disordered regions span residues 1–29 and 69–89; these read MLRSVVNNNDKAKESEQSVRVATDDPTYQ and SDDEKMETSSTSSPQSEQSIG. The span at 76–87 shows a compositional bias: low complexity; that stretch reads TSSTSSPQSEQS. The Phorbol-ester/DAG-type zinc finger occupies 164–214; the sequence is NHSFKTHSLLHPTWCDKCGDFIWGILKEALKCEHCNYTCHARCRDLVTLDC. Residues 249–268 form a disordered region; the sequence is PAMSSSTGSDKENGNGNSAG. A compositionally biased stretch (polar residues) spans 251-268; it reads MSSSTGSDKENGNGNSAG. The Ras-associating domain occupies 396–496; sequence KTTSLRTITS…RALVLQENDT (101 aa). An SARAH domain is found at 498-545; sequence DILWDAFEIPELENFLRILGMEEKQYVFQTQQKYQQYRYHLDAELRQR.

Interacts with rab-39 (GTP-bound form). Interacts (via SARAH domain) with cst-1; the interaction is required for the phosphorylation of cst-1. In terms of tissue distribution, expressed in the pharynx, epithelial cells, ciliated neurons in the head, body wall muscles, hypodermis, vulva, gonadal sheath cells, tail hypodermis and in coelomocytes. Expressed in the pharynx, neurons and vulva.

The protein localises to the cytoplasm. The protein resides in the cytoskeleton. Its function is as follows. Involved in embryonic morphogenesis. Plays a role in the organization of apical filamentous actin in epithelial cells of the developing embryo. May play a role in let-60-mediated vulval development. May induce nuclear condensation. Positively regulates the oxidative stress response, and this may be in association with the small GTPase rab-39. Not required for muscle integrity. This chain is Ras association domain-containing protein 1 homolog, found in Caenorhabditis elegans.